Here is a 433-residue protein sequence, read N- to C-terminus: tRNA-2-methylthio-N(6)-dimethylallyladenosine synthase (433 aa).

In terms of domain architecture, MTTase N-terminal spans 3–118; the sequence is KKLFIQTLGC…ISRVIHQEKA (116 aa). [4Fe-4S] cluster is bound by residues Cys12, Cys49, Cys81, Cys150, Cys154, and Cys157. In terms of domain architecture, Radical SAM core spans 136 to 369; the sequence is SRNDYKAMVN…QARHKEILEE (234 aa). In terms of domain architecture, TRAM spans 372–433; sequence QKEVGAIHSV…YRAFLIGEPL (62 aa).

It belongs to the methylthiotransferase family. MiaB subfamily. As to quaternary structure, monomer. Requires [4Fe-4S] cluster as cofactor.

It localises to the cytoplasm. The enzyme catalyses N(6)-dimethylallyladenosine(37) in tRNA + (sulfur carrier)-SH + AH2 + 2 S-adenosyl-L-methionine = 2-methylsulfanyl-N(6)-dimethylallyladenosine(37) in tRNA + (sulfur carrier)-H + 5'-deoxyadenosine + L-methionine + A + S-adenosyl-L-homocysteine + 2 H(+). Its function is as follows. Catalyzes the methylthiolation of N6-(dimethylallyl)adenosine (i(6)A), leading to the formation of 2-methylthio-N6-(dimethylallyl)adenosine (ms(2)i(6)A) at position 37 in tRNAs that read codons beginning with uridine. The protein is tRNA-2-methylthio-N(6)-dimethylallyladenosine synthase of Wolinella succinogenes (strain ATCC 29543 / DSM 1740 / CCUG 13145 / JCM 31913 / LMG 7466 / NCTC 11488 / FDC 602W) (Vibrio succinogenes).